Here is a 343-residue protein sequence, read N- to C-terminus: Palmitoyltransferase ZDHHC4 (343 aa).

Topologically, residues 1–2 are lumenal; sequence MD. The chain crosses the membrane as a helical span at residues 3–23; it reads FLVLFLLYLALVLLGFVMICI. Residues 24–67 are Cytoplasmic-facing; the sequence is GSKTHYLQGLISRGAQVFSYIIPECLQRAMLSVLHYLFHTRNYT. A helical transmembrane segment spans residues 68-88; sequence FVVLHLILQGMVYTEYTWEIF. Topologically, residues 89-95 are lumenal; sequence GLCQQLE. Residues 96–116 traverse the membrane as a helical segment; sequence FSLYYLFLPYLLLIVNLLFFT. Residues 117 to 196 lie on the Cytoplasmic side of the membrane; it reads LSCVTNPGTI…GAWNTRYFLS (80 aa). Positions 149 to 199 constitute a DHHC domain; the sequence is VRCPTCDLRKPARSKHCSVCNRCVHRFDHHCVWVNNCIGAWNTRYFLSYLF. The active-site S-palmitoyl cysteine intermediate is C179. Residues 197 to 217 traverse the membrane as a helical segment; sequence YLFTLTASAATMAVVSTVFLV. The Lumenal segment spans residues 218–255; that stretch reads RLVVMSDVYLQTYVDDLGHLQVVDTVFLVQYLFLTFPR. A helical transmembrane segment spans residues 256 to 276; that stretch reads IVFLVGFVVVLSFLLGGYLCF. At 277-343 the chain is on the cytoplasmic side; it reads CLYLAATNQT…ATACYERKEK (67 aa). Positions 340–343 match the Di-lysine motif motif; that stretch reads RKEK.

This sequence belongs to the DHHC palmitoyltransferase family. In terms of assembly, interacts with CPT1A.

The protein resides in the endoplasmic reticulum membrane. Its subcellular location is the golgi apparatus membrane. It localises to the cell membrane. It carries out the reaction L-cysteinyl-[protein] + hexadecanoyl-CoA = S-hexadecanoyl-L-cysteinyl-[protein] + CoA. In terms of biological role, palmitoyltransferase that could catalyze the addition of palmitate onto protein substrates including the D(2) dopamine receptor DRD2, GSK3B or MAVS. Mediates GSK3B palmitoylation to prevent its AKT1-mediated phosphorylation leading to activation of the STAT3 signaling pathway. Also catalyzes MAVS palmitoylation which promotes its stabilization and activation by inhibiting 'Lys-48'- but facilitating 'Lys-63'-linked ubiquitination. This chain is Palmitoyltransferase ZDHHC4, found in Bos taurus (Bovine).